A 199-amino-acid chain; its full sequence is Transgelin-3 (199 aa).

The 113-residue stretch at Ala24 to Ala136 folds into the Calponin-homology (CH) domain. At Ser163 the chain carries Phosphoserine. A Calponin-like repeat occupies Ile174 to Met199. Residues Met178–Gly188 are compositionally biased toward polar residues. A disordered region spans residues Met178 to Met199.

It belongs to the calponin family.

This chain is Transgelin-3 (TAGLN3), found in Bos taurus (Bovine).